The chain runs to 298 residues: 4-nitrophenylphosphatase (298 aa).

In terms of assembly, homodimer. In terms of processing, the N-terminus is blocked.

It catalyses the reaction 4-nitrophenyl phosphate + H2O = 4-nitrophenol + phosphate + H(+). With respect to regulation, activity enhanced by Mg(2+) ion but inhibited by Zn(2+) ion. This is 4-nitrophenylphosphatase (pho2) from Schizosaccharomyces pombe (strain 972 / ATCC 24843) (Fission yeast).